We begin with the raw amino-acid sequence, 107 residues long: U1-lycotoxin-Ls1g (107 aa).

An N-terminal signal peptide occupies residues 1–20 (MMKVLVVVALLVTLISYSSS). Residues 21–41 (EGIDDLEADELLSLMANEQTR) constitute a propeptide that is removed on maturation. Intrachain disulfides connect Cys51/Cys68, Cys58/Cys86, and Cys70/Cys84.

Belongs to the neurotoxin 19 (CSTX) family. 04 (U1-Lctx) subfamily. As to expression, expressed by the venom gland.

Its subcellular location is the secreted. In Lycosa singoriensis (Wolf spider), this protein is U1-lycotoxin-Ls1g.